The primary structure comprises 480 residues: Ribulose bisphosphate carboxylase large chain (480 aa).

Residues 1–2 constitute a propeptide that is removed on maturation; it reads MS. Position 3 is an N-acetylproline (proline 3). Position 14 is an N6,N6,N6-trimethyllysine (lysine 14). Asparagine 123 and threonine 173 together coordinate substrate. Lysine 175 serves as the catalytic Proton acceptor. Lysine 177 contributes to the substrate binding site. 3 residues coordinate Mg(2+): lysine 201, aspartate 203, and glutamate 204. At lysine 201 the chain carries N6-carboxylysine. The active-site Proton acceptor is histidine 294. Residues arginine 295, histidine 327, and serine 379 each coordinate substrate.

This sequence belongs to the RuBisCO large chain family. Type I subfamily. Heterohexadecamer of 8 large chains and 8 small chains; disulfide-linked. The disulfide link is formed within the large subunit homodimers. Requires Mg(2+) as cofactor. The disulfide bond which can form in the large chain dimeric partners within the hexadecamer appears to be associated with oxidative stress and protein turnover.

The protein localises to the plastid. It localises to the chloroplast. The catalysed reaction is 2 (2R)-3-phosphoglycerate + 2 H(+) = D-ribulose 1,5-bisphosphate + CO2 + H2O. It catalyses the reaction D-ribulose 1,5-bisphosphate + O2 = 2-phosphoglycolate + (2R)-3-phosphoglycerate + 2 H(+). Its function is as follows. RuBisCO catalyzes two reactions: the carboxylation of D-ribulose 1,5-bisphosphate, the primary event in carbon dioxide fixation, as well as the oxidative fragmentation of the pentose substrate in the photorespiration process. Both reactions occur simultaneously and in competition at the same active site. This is Ribulose bisphosphate carboxylase large chain from Mollugo verticillata (Green carpetweed).